We begin with the raw amino-acid sequence, 84 residues long: Cytochrome c oxidase subunit 12, mitochondrial (84 aa).

The 44-residue stretch at 27 to 70 (TKHCWQNYVDYHKCILAKGEDFAPCRQFWLAYRSLCPSGWYQRW) folds into the CHCH domain. The Cx9C motif signature appears at 30-40 (CWQNYVDYHKC). 2 disulfides stabilise this stretch: Cys30/Cys62 and Cys40/Cys51. The Cx10C motif motif lies at 51–62 (CRQFWLAYRSLC).

It belongs to the cytochrome c oxidase subunit 6B family. Component of the cytochrome c oxidase (complex IV, CIV), a multisubunit enzyme composed of 11 subunits. The complex is composed of a catalytic core of 3 subunits Cox1, Cox2 and Cox3, encoded in the mitochondrial DNA, and 8 supernumerary subunits Cox4, Cox5a/Cox5, Cox6, Cox7, Cox8, Cox7a/Cox9, Cox6b/Cox12 and Cox6a/Cox13, which are encoded in the nuclear genome. The complex exists as a monomer or a dimer and forms respiratory supercomplexes (SCs) in the inner mitochondrial membrane with NADH-ubiquinone oxidoreductase (complex I, CI) and ubiquinol-cytochrome c oxidoreductase (cytochrome b-c1 complex, complex III, CIII), resulting in various different assemblies (supercomplexes I(1)IV(1), I(1)III(3)IV(2), III(2)IV(1) and III(2)IV(2) as well as larger supercomplexes of compositions like I(1)III(2)IV(5-6)).

It localises to the mitochondrion inner membrane. Its pathway is energy metabolism; oxidative phosphorylation. Functionally, component of the cytochrome c oxidase, the last enzyme in the mitochondrial electron transport chain which drives oxidative phosphorylation. The respiratory chain contains 3 multisubunit complexes succinate dehydrogenase (complex II, CII), ubiquinol-cytochrome c oxidoreductase (cytochrome b-c1 complex, complex III, CIII) and cytochrome c oxidase (complex IV, CIV), that cooperate to transfer electrons derived from NADH and succinate to molecular oxygen, creating an electrochemical gradient over the inner membrane that drives transmembrane transport and the ATP synthase. Cytochrome c oxidase is the component of the respiratory chain that catalyzes the reduction of oxygen to water. Electrons originating from reduced cytochrome c in the intermembrane space (IMS) are transferred via the dinuclear copper A center (CU(A)) of Cox2 and heme A of Cox1 to the active site in Cox1, a binuclear center (BNC) formed by heme A3 and copper B (CU(B)). The BNC reduces molecular oxygen to 2 water molecules using 4 electrons from cytochrome c in the IMS and 4 protons from the mitochondrial matrix. This chain is Cytochrome c oxidase subunit 12, mitochondrial (cox-13), found in Neurospora crassa (strain ATCC 24698 / 74-OR23-1A / CBS 708.71 / DSM 1257 / FGSC 987).